The following is a 527-amino-acid chain: T-complex protein 1 subunit beta (527 aa).

It belongs to the TCP-1 chaperonin family. In terms of assembly, heterooligomeric complex of about 850 to 900 kDa that forms two stacked rings, 12 to 16 nm in diameter.

It localises to the cytoplasm. Molecular chaperone; assists the folding of proteins upon ATP hydrolysis. Known to play a role, in vitro, in the folding of actin and tubulin. The chain is T-complex protein 1 subunit beta from Arabidopsis thaliana (Mouse-ear cress).